Consider the following 622-residue polypeptide: MRVSAGLMIGGSCVATAATVLNAFVINKQFYPSIVYLSKSNASMAVLYFQGIVLVYLMFQLLKSILFGDLRAAEAEHLSERTWHAVLETCLAFTVFRDDFSAMFVMQFIGLLFIKCFHWLADDRVDMMERSPVITLRFHLRMMTVLAALGFADSYFVSSAYFSTITKGASSQIVFGFEYAILLALVLHVTIKYLLHMHDLRNPQSWDNKAVYLLYAELLINLIRCVLYGFFAVIMLRVHTFPLFSVRPFYQSVRALHKAFLDVILSRRAINAMNSQFPVVSNDELSAMDATCIICREEMTVESSPKRLPCSHVFHAHCLRSWFQRQQTCPTCRTDIWQGRNGAAGGANAGGAAENNAAGAPPAAGIPPFLPFLGHQFGFPQAAAGAQVGGAQAGGHPGPFPHQIFYAPAPANRPEFMNLAPPPMPMAGPPGMFPMMPPPPIPQPNAAPGESSNAEPPGRPNFDRFSVEELHRMEGDMRDAILARIQAMENIMVILESAQVQMVQLAAITPLRRPVPTAEASEEETATASSVPTSVPSEEPSPAPSTPETASAPRSMFRGNLFNDTQSTSTPSTSAGPQPSLTPSTSSVPSTSSVRTPEADEVRQRRLAHLNARFPPPNPEHE.

An N-terminal signal peptide occupies residues Met1–Ala23. Topologically, residues Phe24–Asn41 are lumenal. The chain crosses the membrane as a helical span at residues Ala42–Leu62. The Cytoplasmic portion of the chain corresponds to Lys63–Asp99. The helical transmembrane segment at Phe100–Leu120 threads the bilayer. The Lumenal segment spans residues Ala121–Arg141. Residues Met142–Phe162 form a helical membrane-spanning segment. Topologically, residues Ser163–Ser170 are cytoplasmic. A helical membrane pass occupies residues Ser171–Ile191. The Lumenal segment spans residues Lys192–Tyr215. Residues Ala216–Leu236 form a helical membrane-spanning segment. The Cytoplasmic portion of the chain corresponds to Arg237–Glu622. An RING-type; atypical zinc finger spans residues Cys292–Arg333. The segment covering Met436–Asn445 has biased composition (pro residues). 2 disordered regions span residues Met436–Asp463 and Pro514–Glu622. Residues Ala526–Glu538 show a composition bias toward low complexity. Polar residues predominate over residues Phe562–Pro577. Residues Pro579–Thr596 show a composition bias toward low complexity.

This sequence belongs to the HRD1 family. Homodimer.

The protein localises to the endoplasmic reticulum membrane. It carries out the reaction S-ubiquitinyl-[E2 ubiquitin-conjugating enzyme]-L-cysteine + [acceptor protein]-L-lysine = [E2 ubiquitin-conjugating enzyme]-L-cysteine + N(6)-ubiquitinyl-[acceptor protein]-L-lysine.. It functions in the pathway protein modification; protein ubiquitination. In terms of biological role, acts as an E3 ubiquitin-protein ligase which accepts ubiquitin specifically from endoplasmic reticulum-associated ubc-7 E2 ligase and transfers it to substrates, promoting their degradation. Component of the endoplasmic reticulum quality control (ERQC) system, which is also called the ER-associated degradation (ERAD) system, involved in ubiquitin-dependent degradation of misfolded endoplasmic reticulum proteins. Also promotes the degradation of normal but naturally short-lived proteins. Protects cells from ER stress-induced apoptosis. Thought to play a role together with hsp-3 in developmental growth and function of intestinal cells and to play a role together with hsp-4 in gonad formation. The sequence is that of E3 ubiquitin-protein ligase hrd-1 from Caenorhabditis briggsae.